The following is a 179-amino-acid chain: Probable chorismate pyruvate-lyase (179 aa).

Substrate-binding residues include Arg-82, Leu-120, and Glu-165.

This sequence belongs to the UbiC family.

It localises to the cytoplasm. The enzyme catalyses chorismate = 4-hydroxybenzoate + pyruvate. It functions in the pathway cofactor biosynthesis; ubiquinone biosynthesis. Removes the pyruvyl group from chorismate, with concomitant aromatization of the ring, to provide 4-hydroxybenzoate (4HB) for the ubiquinone pathway. The chain is Probable chorismate pyruvate-lyase from Vibrio vulnificus (strain CMCP6).